Here is a 300-residue protein sequence, read N- to C-terminus: Cathepsin B-like CP2 (300 aa).

Residues 1–19 form the signal peptide; sequence MKLFLLAAAAFSAPALTVS. 3 disulfide bridges follow: cysteine 88–cysteine 115, cysteine 98–cysteine 141, and cysteine 134–cysteine 177. Residue cysteine 101 is part of the active site. Catalysis depends on residues histidine 245 and asparagine 266.

The protein belongs to the peptidase C1 family.

The protein resides in the vacuole. Its function is as follows. Thiol protease which is required for parasite excystation and invasion of the proximal small intestine of the human host. The polypeptide is Cathepsin B-like CP2 (CP2) (Giardia intestinalis (Giardia lamblia)).